The chain runs to 226 residues: Large ribosomal subunit protein uL1 (226 aa).

It belongs to the universal ribosomal protein uL1 family. As to quaternary structure, part of the 50S ribosomal subunit.

In terms of biological role, binds directly to 23S rRNA. The L1 stalk is quite mobile in the ribosome, and is involved in E site tRNA release. Protein L1 is also a translational repressor protein, it controls the translation of the L11 operon by binding to its mRNA. The protein is Large ribosomal subunit protein uL1 of Mycoplasmoides gallisepticum (strain R(low / passage 15 / clone 2)) (Mycoplasma gallisepticum).